The primary structure comprises 284 residues: uncharacterized protein (284 aa).

The first 20 residues, 1–20 (MLHNIQSILQFLLFVSSVQA), serve as a signal peptide directing secretion. One can recognise an Apple domain in the interval 38–121 (CFEFKKNYWI…FTVNFFRNIC (84 aa)). 3 disulfides stabilise this stretch: C38–C121, C63–C89, and C67–C77. A glycan (N-linked (GlcNAc...) asparagine) is linked at N256. A helical transmembrane segment spans residues 264-284 (SSTGLKFTTGLLIILVVFLFL).

The protein localises to the membrane. This is an uncharacterized protein from Caenorhabditis elegans.